The primary structure comprises 68 residues: Small ribosomal subunit protein bS21 (68 aa).

The protein belongs to the bacterial ribosomal protein bS21 family.

This is Small ribosomal subunit protein bS21 from Paracoccus denitrificans (strain Pd 1222).